The primary structure comprises 285 residues: Bis(5'-nucleosyl)-tetraphosphatase, symmetrical (285 aa).

This sequence belongs to the Ap4A hydrolase family.

The enzyme catalyses P(1),P(4)-bis(5'-adenosyl) tetraphosphate + H2O = 2 ADP + 2 H(+). In terms of biological role, hydrolyzes diadenosine 5',5'''-P1,P4-tetraphosphate to yield ADP. The protein is Bis(5'-nucleosyl)-tetraphosphatase, symmetrical of Colwellia psychrerythraea (strain 34H / ATCC BAA-681) (Vibrio psychroerythus).